A 95-amino-acid chain; its full sequence is Protein TusB (95 aa).

The protein belongs to the DsrH/TusB family. Heterohexamer, formed by a dimer of trimers. The hexameric TusBCD complex contains 2 copies each of TusB, TusC and TusD. The TusBCD complex interacts with TusE.

It is found in the cytoplasm. Part of a sulfur-relay system required for 2-thiolation of 5-methylaminomethyl-2-thiouridine (mnm(5)s(2)U) at tRNA wobble positions. The protein is Protein TusB of Escherichia coli (strain SMS-3-5 / SECEC).